The primary structure comprises 493 residues: Ecdysteroid UDP-glucosyltransferase (493 aa).

The N-terminal stretch at 1 to 17 (MIFILLTTLLAVGGAQT) is a signal peptide.

It belongs to the UDP-glycosyltransferase family.

Its function is as follows. Catalyzes the transfer of glucose from UDP-glucose to ecdysteroids which are insect molting hormones. Expression of egt interferes with normal insect development and block molting. The polypeptide is Ecdysteroid UDP-glucosyltransferase (egt) (Choristoneura fumiferana defective polyhedrosis virus (Cfdef)).